Here is a 1001-residue protein sequence, read N- to C-terminus: Serine/threonine-protein kinase TAO1-A (1001 aa).

The region spanning 28–281 is the Protein kinase domain; that stretch reads FSDLREIGHG…SDELLKNMFV (254 aa). Residues 34–42 and Lys-57 each bind ATP; that span reads IGHGSFGAV. The active-site Proton acceptor is Asp-151. 2 disordered regions span residues 324-431 and 567-586; these read PAVE…HKSH and KEELNENQSTPKKEKQEWLS. Residues 350-370 are compositionally biased toward low complexity; sequence SNQSIPSMSISASSQSSSVTS. Composition is skewed to basic and acidic residues over residues 375-388 and 577-586; these read SDDKSELDMMEGDH and PKKEKQEWLS. Coiled-coil stretches lie at residues 458–651 and 754–877; these read SELR…EHAM and KAVL…EIEA. The disordered stretch occupies residues 911–1001; that stretch reads SHNPTGGPGP…ISNGSRMSYT (91 aa). Residues 921 to 930 show a composition bias toward low complexity; that stretch reads HWGHPMAGPP. Polar residues-rich tracts occupy residues 949 to 967 and 974 to 1001; these read GSVQGVSRGSTMGVRNSPQ and SGGQTEQGMSRSTSVTSQISNGSRMSYT.

It belongs to the protein kinase superfamily. STE Ser/Thr protein kinase family. STE20 subfamily.

It is found in the cytoplasm. The catalysed reaction is L-seryl-[protein] + ATP = O-phospho-L-seryl-[protein] + ADP + H(+). It catalyses the reaction L-threonyl-[protein] + ATP = O-phospho-L-threonyl-[protein] + ADP + H(+). Functionally, serine/threonine-protein kinase involved in various processes such as p38/mapk14 stress-activated MAPK cascade, DNA damage response and regulation of cytoskeleton stability. Acts as an activator of the p38/MAPK14 stress-activated MAPK cascade by mediating phosphorylation and subsequent activation of upstream MAP kinase kinases. In response to DNA damage, involved in the G2/M transition DNA damage checkpoint by activating the p38/MAPK14 stress-activated MAPK cascade. This Xenopus laevis (African clawed frog) protein is Serine/threonine-protein kinase TAO1-A (taok1-a).